The chain runs to 1151 residues: Nardilysin (1151 aa).

A signal peptide spans 1–20 (MLRRVTVAAVCATRRKLCEA). Disordered regions lie at residues 53–108 (RNKA…KSPS) and 133–207 (MEGK…KKTT). 3 positions are modified to phosphoserine: Ser-86, Ser-94, and Ser-96. Acidic residues predominate over residues 141–198 (TDDEEEEEVEEEEEDDDEDSGAEIEDDDEEGFDDEDEFDDEHDDDLDTEDNELEELEE). Zn(2+) is bound at residue His-233. Glu-236 functions as the Proton acceptor in the catalytic mechanism. Zn(2+)-binding residues include His-237 and Glu-314.

It belongs to the peptidase M16 family. As to quaternary structure, interacts with BACE1 and NRG1. The cofactor is Zn(2+). Primarily in adult heart, skeletal muscle, and testis and at much lower levels in other tissues.

It is found in the mitochondrion. The protein resides in the cell projection. Its subcellular location is the dendrite. The enzyme catalyses Hydrolysis of polypeptides, preferably at -Xaa-|-Arg-Lys-, and less commonly at -Arg-|-Arg-Xaa-, in which Xaa is not Arg or Lys.. Cleaves peptide substrates on the N-terminus of arginine residues in dibasic pairs. Is a critical activator of BACE1- and ADAM17-mediated pro-neuregulin ectodomain shedding, involved in the positive regulation of axonal maturation and myelination. Required for proper functioning of 2-oxoglutarate dehydrogenase (OGDH). The protein is Nardilysin of Homo sapiens (Human).